A 223-amino-acid chain; its full sequence is Octanoyltransferase (223 aa).

The region spanning 32–207 is the BPL/LPL catalytic domain; that stretch reads DETPDEIWLV…HFAHHLAITD (176 aa). Substrate-binding positions include 71 to 78, 138 to 140, and 151 to 153; these read RGGQVTYH, SLG, and GLA. Residue Cys-169 is the Acyl-thioester intermediate of the active site.

The protein belongs to the LipB family.

It is found in the cytoplasm. It carries out the reaction octanoyl-[ACP] + L-lysyl-[protein] = N(6)-octanoyl-L-lysyl-[protein] + holo-[ACP] + H(+). The protein operates within protein modification; protein lipoylation via endogenous pathway; protein N(6)-(lipoyl)lysine from octanoyl-[acyl-carrier-protein]: step 1/2. Functionally, catalyzes the transfer of endogenously produced octanoic acid from octanoyl-acyl-carrier-protein onto the lipoyl domains of lipoate-dependent enzymes. Lipoyl-ACP can also act as a substrate although octanoyl-ACP is likely to be the physiological substrate. This Erwinia tasmaniensis (strain DSM 17950 / CFBP 7177 / CIP 109463 / NCPPB 4357 / Et1/99) protein is Octanoyltransferase.